The sequence spans 466 residues: Cysteine--tRNA ligase (466 aa).

Cysteine 28 lines the Zn(2+) pocket. The 'HIGH' region signature appears at 30 to 40 (PTVYNYIHIGN). Positions 208, 233, and 237 each coordinate Zn(2+). The 'KMSKS' region motif lies at 265 to 269 (KMSKS). Residue lysine 268 participates in ATP binding.

This sequence belongs to the class-I aminoacyl-tRNA synthetase family. As to quaternary structure, monomer. The cofactor is Zn(2+).

It localises to the cytoplasm. The enzyme catalyses tRNA(Cys) + L-cysteine + ATP = L-cysteinyl-tRNA(Cys) + AMP + diphosphate. The protein is Cysteine--tRNA ligase of Staphylococcus carnosus (strain TM300).